Here is a 259-residue protein sequence, read N- to C-terminus: Submandibular glandular kallikrein-9 (259 aa).

The first 18 residues, 1 to 18, serve as a signal peptide directing secretion; that stretch reads MWFLILFLALSLGQIDAA. Residues 19 to 24 constitute a propeptide, activation peptide; that stretch reads PPGQSR. The 232-residue stretch at 25–256 folds into the Peptidase S1 domain; that stretch reads VVGGYNCETN…FTSWIKKVMK (232 aa). 5 disulfides stabilise this stretch: C31/C171, C48/C64, C150/C217, C182/C196, and C207/C232. Catalysis depends on H63, which acts as the Charge relay system. N-linked (GlcNAc...) asparagine glycosylation occurs at N106. Catalysis depends on D118, which acts as the Charge relay system. Residue S211 is the Charge relay system of the active site.

The protein belongs to the peptidase S1 family. Kallikrein subfamily. In terms of assembly, heterodimer of a light chain and heavy chain linked by a disulfide bond.

The enzyme catalyses Preferential cleavage of Arg-|-Xaa bonds in small molecule substrates. Highly selective action to release kallidin (lysyl-bradykinin) from kininogen involves hydrolysis of Met-|-Xaa or Leu-|-Xaa.. Functionally, glandular kallikreins cleave Met-Lys and Arg-Ser bonds in kininogen to release Lys-bradykinin. This enzyme has a vasoconstrictor activity. KLK-9 has both a chymotrypsin-like and a trypsin-like properties. The polypeptide is Submandibular glandular kallikrein-9 (Klk9) (Rattus norvegicus (Rat)).